Reading from the N-terminus, the 670-residue chain is RxLR effector protein PSR2 (670 aa).

An N-terminal signal peptide occupies residues 1–17 (MRLQCVVLFAALTLVAA). The RxLR-dEER motif lies at 39–54 (RLLRPGNPAGKEDEER). Residue asparagine 57 is glycosylated (N-linked (GlcNAc...) asparagine). One copy of the WY1 repeat lies at 79-126 (KLLKWADAKKPPETVFTRLRLDKTGTQLFDNTDFPVWAAYTRSVAQTD). A 7 X 93 AA tandem repeats region spans residues 79-670 (KLLKWADAKK…YSAKFKVRWG (592 aa)). One copy of the LWY2 repeat lies at 127–217 (SEASAVMLKT…NYMKLSNKEN (91 aa)). The LWY3 repeat unit spans residues 218–308 (PKAQTTLIAT…KYINYYNKEN (91 aa)). Residues 309-399 (PDEKTTVLAK…KYTENFNLNK (91 aa)) form an LWY4 repeat. The stretch at 400–492 (EINEQVTAIQ…KFLEKYNTAN (93 aa)) is one LWY5 repeat. An LWY6 repeat occupies 493 to 583 (PGKEQTMISG…KYLNAFNDKA (91 aa)). One copy of the LWY7 repeat lies at 584 to 670 (PVKKALMIDT…YSAKFKVRWG (87 aa)).

The protein belongs to the RxLR effector family. As to quaternary structure, interacts with host dsRNA-binding protein DRB4.

It is found in the secreted. Its subcellular location is the host cell. Functionally, secreted effector that possesses RNA silencing suppression activity by inhibiting the biogenesis of small RNAs in the host plant to promote enhanced susceptibility of host to the pathogen during infection. Interferes with secondary siRNA production by associating with host dsRNA-binding protein DRB4. Inhibits the host salicylic acid pathway during infection. The protein is RxLR effector protein PSR2 of Phytophthora sojae (Soybean stem and root rot agent).